Here is a 234-residue protein sequence, read N- to C-terminus: LexA repressor (234 aa).

The segment at residues 26–46 (FDEMKDALDLRSKSGIHRLIT) is a DNA-binding region (H-T-H motif). Positions 80–107 (RGFTPSVIEGNLGKVRPPSPQHAEDDSD) are disordered. Active-site for autocatalytic cleavage activity residues include Ser-155 and Lys-193.

It belongs to the peptidase S24 family. As to quaternary structure, homodimer.

The enzyme catalyses Hydrolysis of Ala-|-Gly bond in repressor LexA.. Its function is as follows. Represses a number of genes involved in the response to DNA damage (SOS response), including recA and lexA. In the presence of single-stranded DNA, RecA interacts with LexA causing an autocatalytic cleavage which disrupts the DNA-binding part of LexA, leading to derepression of the SOS regulon and eventually DNA repair. This is LexA repressor from Rhodopseudomonas palustris (strain HaA2).